Reading from the N-terminus, the 324-residue chain is Appendage-associated protein (324 aa).

A signal peptide spans 1 to 32 (MGCPVSRGGSPGCGRRIAEELRLAEDARLRLA). Residues 195-255 (IAQAKEIAQA…AADKLQALGK (61 aa)) are a coiled coil.

It localises to the secreted. Associates with actin filament appendages that are formed in the inclusion appendages of the parasitophorous vacuole during infection of the host erythrocyte. This chain is Appendage-associated protein (aaaP1), found in Anaplasma marginale (strain Florida).